Reading from the N-terminus, the 197-residue chain is uncharacterized protein (197 aa).

Belongs to the NAD(P)H dehydrogenase (quinone) family.

This is an uncharacterized protein from Bacillus subtilis (strain 168).